The sequence spans 236 residues: Small ribosomal subunit protein uS3 (236 aa).

In terms of domain architecture, KH type-2 spans 39 to 107 (VRQFLTKELK…PAQINISEVR (69 aa)).

This sequence belongs to the universal ribosomal protein uS3 family. Part of the 30S ribosomal subunit. Forms a tight complex with proteins S10 and S14.

Binds the lower part of the 30S subunit head. Binds mRNA in the 70S ribosome, positioning it for translation. This is Small ribosomal subunit protein uS3 from Aeromonas salmonicida (strain A449).